Here is a 189-residue protein sequence, read N- to C-terminus: Thymidine kinase (189 aa).

Residues 9–16 and 85–88 contribute to the ATP site; these read GTMNSGKS and DEAQ. Glu86 (proton acceptor) is an active-site residue. Zn(2+) is bound by residues Cys143, Cys146, Cys180, and His183.

Belongs to the thymidine kinase family. Homotetramer.

It localises to the cytoplasm. It carries out the reaction thymidine + ATP = dTMP + ADP + H(+). The chain is Thymidine kinase from Lactococcus lactis subsp. lactis (strain IL1403) (Streptococcus lactis).